A 141-amino-acid chain; its full sequence is Hemoglobin subunit alpha (141 aa).

Residues 1 to 141 (VLSSKDKANI…VSTVLTSKYR (141 aa)) enclose the Globin domain. Phosphoserine is present on S3. An N6-succinyllysine mark is found at K7 and K11. K16 is subject to N6-acetyllysine; alternate. At K16 the chain carries N6-succinyllysine; alternate. Y24 carries the post-translational modification Phosphotyrosine. N6-succinyllysine is present on K40. S49 is subject to Phosphoserine. H58 lines the O2 pocket. H87 is a binding site for heme b. Position 102 is a phosphoserine (S102). Position 108 is a phosphothreonine (T108). Residue S124 is modified to Phosphoserine. Phosphothreonine is present on residues T134 and T137. S138 bears the Phosphoserine mark.

It belongs to the globin family. Heterotetramer of two alpha chains and two beta chains. As to expression, red blood cells.

Its function is as follows. Involved in oxygen transport from the lung to the various peripheral tissues. Functionally, hemopressin acts as an antagonist peptide of the cannabinoid receptor CNR1. Hemopressin-binding efficiently blocks cannabinoid receptor CNR1 and subsequent signaling. In Vicugna pacos (Alpaca), this protein is Hemoglobin subunit alpha (HBA).